Consider the following 439-residue polypeptide: MDHLAHHYHAHIAELNRRVAEIVSREALSGLVIHSGQPHRMFLDDINYPFKANPHFKAWLPVLDNPNCWLVVNGRDKPQLIFYRPVDFWHKVSDVPEMFWTEHFEIKLLTKADKVAELLPSDITNWAYLGEHLDVAEVLGFTSRNPDSVMSYLHFHRTTKTEYELECMRRANQIAVQGHLAAKNAFYNGASEFEIQQQYLSAVGQGENEVPYGNIIALNQNAAILHYTALEHQNPARRLSFLIDAGASYFGYASDITRTYAFEKNRFDELITAMNKAQLELIDMMRPGVRYPDLHLATHGKVAQMLLDFELATGDAQGLVDQGITSAFFPHGLGHMLGLQVHDVGGFSFDERGTHIPAPEAHPFLRCTRILAPNQVLTMEPGLYIIDTLLNELKQDSRGQQINWRTVDELRPFGGIRIEDNVIVHQDRNENMTRELGLA.

Residues D244, D255, H335, E380, and E419 each coordinate Mn(2+).

Belongs to the peptidase M24B family. Bacterial-type prolidase subfamily. Requires Mn(2+) as cofactor.

The enzyme catalyses Xaa-L-Pro dipeptide + H2O = an L-alpha-amino acid + L-proline. Its function is as follows. Splits dipeptides with a prolyl residue in the C-terminal position. This is Xaa-Pro dipeptidase from Shewanella sp. (strain ANA-3).